The sequence spans 115 residues: Large ribosomal subunit protein uL24 (115 aa).

It belongs to the universal ribosomal protein uL24 family. As to quaternary structure, part of the 50S ribosomal subunit.

Its function is as follows. One of two assembly initiator proteins, it binds directly to the 5'-end of the 23S rRNA, where it nucleates assembly of the 50S subunit. In terms of biological role, one of the proteins that surrounds the polypeptide exit tunnel on the outside of the subunit. The polypeptide is Large ribosomal subunit protein uL24 (Acaryochloris marina (strain MBIC 11017)).